The primary structure comprises 701 residues: Elongation factor G 1 (701 aa).

The tr-type G domain maps to 13–288 (KYTRNIGIMA…GVIDYLPSPL (276 aa)). GTP is bound by residues 22 to 29 (AHIDAGKT), 86 to 90 (DTPGH), and 140 to 143 (NKMD).

Belongs to the TRAFAC class translation factor GTPase superfamily. Classic translation factor GTPase family. EF-G/EF-2 subfamily.

Its subcellular location is the cytoplasm. Catalyzes the GTP-dependent ribosomal translocation step during translation elongation. During this step, the ribosome changes from the pre-translocational (PRE) to the post-translocational (POST) state as the newly formed A-site-bound peptidyl-tRNA and P-site-bound deacylated tRNA move to the P and E sites, respectively. Catalyzes the coordinated movement of the two tRNA molecules, the mRNA and conformational changes in the ribosome. The chain is Elongation factor G 1 from Bdellovibrio bacteriovorus (strain ATCC 15356 / DSM 50701 / NCIMB 9529 / HD100).